A 1074-amino-acid polypeptide reads, in one-letter code: DNA-directed RNA polymerase subunit beta (1074 aa).

The protein belongs to the RNA polymerase beta chain family. As to quaternary structure, in plastids the minimal PEP RNA polymerase catalytic core is composed of four subunits: alpha, beta, beta', and beta''. When a (nuclear-encoded) sigma factor is associated with the core the holoenzyme is formed, which can initiate transcription.

The protein localises to the plastid. It localises to the chloroplast. It catalyses the reaction RNA(n) + a ribonucleoside 5'-triphosphate = RNA(n+1) + diphosphate. DNA-dependent RNA polymerase catalyzes the transcription of DNA into RNA using the four ribonucleoside triphosphates as substrates. This is DNA-directed RNA polymerase subunit beta from Chara vulgaris (Common stonewort).